The following is a 354-amino-acid chain: Probable L-ascorbate-6-phosphate lactonase UlaG (354 aa).

This sequence belongs to the UlaG family. A divalent metal cation is required as a cofactor.

Its subcellular location is the cytoplasm. It catalyses the reaction L-ascorbate 6-phosphate + H2O = 3-dehydro-L-gulonate 6-phosphate. It functions in the pathway cofactor degradation; L-ascorbate degradation; D-xylulose 5-phosphate from L-ascorbate: step 1/4. Functionally, probably catalyzes the hydrolysis of L-ascorbate-6-P into 3-keto-L-gulonate-6-P. Is essential for L-ascorbate utilization under anaerobic conditions. The protein is Probable L-ascorbate-6-phosphate lactonase UlaG of Salmonella gallinarum (strain 287/91 / NCTC 13346).